A 147-amino-acid polypeptide reads, in one-letter code: Deoxyuridine 5'-triphosphate nucleotidohydrolase (147 aa).

Substrate is bound by residues 67 to 69 (RSG), asparagine 80, and 84 to 86 (TID).

The protein belongs to the dUTPase family. Mg(2+) is required as a cofactor.

The catalysed reaction is dUTP + H2O = dUMP + diphosphate + H(+). It participates in pyrimidine metabolism; dUMP biosynthesis; dUMP from dCTP (dUTP route): step 2/2. In terms of biological role, this enzyme is involved in nucleotide metabolism: it produces dUMP, the immediate precursor of thymidine nucleotides and it decreases the intracellular concentration of dUTP so that uracil cannot be incorporated into DNA. The protein is Deoxyuridine 5'-triphosphate nucleotidohydrolase of Syntrophotalea carbinolica (strain DSM 2380 / NBRC 103641 / GraBd1) (Pelobacter carbinolicus).